The chain runs to 607 residues: UvrABC system protein C (607 aa).

Residues 19 to 97 form the GIY-YIG domain; it reads TLSGVYQMRD…IKQYQPKFNI (79 aa). Positions 205–240 constitute a UVR domain; it reads EHLLQTLTEHMLQASAAQQYERAAIVRDQISELRTI.

It belongs to the UvrC family. As to quaternary structure, interacts with UvrB in an incision complex.

Its subcellular location is the cytoplasm. Its function is as follows. The UvrABC repair system catalyzes the recognition and processing of DNA lesions. UvrC both incises the 5' and 3' sides of the lesion. The N-terminal half is responsible for the 3' incision and the C-terminal half is responsible for the 5' incision. The polypeptide is UvrABC system protein C (Dichelobacter nodosus (strain VCS1703A)).